The following is a 310-amino-acid chain: D-alanine--D-alanine ligase (310 aa).

In terms of domain architecture, ATP-grasp spans 107-302 (KQAFQAARLT…FEDLVERILA (196 aa)). Residue 135–188 (EFSLPVVVKPSQEGSSVGVSIVKKESEFAAAMKEAFRYDREILVEQFIKGSEVQ) participates in ATP binding. Mg(2+)-binding residues include Asp-256, Glu-269, and Asn-271.

It belongs to the D-alanine--D-alanine ligase family. Mg(2+) is required as a cofactor. It depends on Mn(2+) as a cofactor.

It localises to the cytoplasm. It catalyses the reaction 2 D-alanine + ATP = D-alanyl-D-alanine + ADP + phosphate + H(+). It functions in the pathway cell wall biogenesis; peptidoglycan biosynthesis. In terms of biological role, cell wall formation. The chain is D-alanine--D-alanine ligase from Geotalea uraniireducens (strain Rf4) (Geobacter uraniireducens).